A 1073-amino-acid polypeptide reads, in one-letter code: Serine/threonine-protein kinase 11-interacting protein (1073 aa).

LRR repeat units follow at residues Glu-166 to Leu-187, Ala-189 to Leu-210, Glu-212 to Ser-233, Lys-236 to Val-257, Asn-258 to Ser-279, and Tyr-283 to Thr-304. Disordered stretches follow at residues Val-389–Leu-409, Ser-455–Glu-533, Glu-724–Lys-817, and Met-834–Thr-859. Residues Arg-515–Pro-532 show a composition bias toward acidic residues. 2 stretches are compositionally biased toward polar residues: residues Met-779–Pro-788 and Arg-843–Thr-859.

This sequence belongs to the STK11IP family.

It localises to the cytoplasm. This Gallus gallus (Chicken) protein is Serine/threonine-protein kinase 11-interacting protein (STK11IP).